Here is a 162-residue protein sequence, read N- to C-terminus: NADH-quinone oxidoreductase subunit I (162 aa).

2 consecutive 4Fe-4S ferredoxin-type domains span residues 53-83 (LRRY…IDSE) and 93-122 (TRYD…ETRI). Cys-63, Cys-66, Cys-69, Cys-73, Cys-102, Cys-105, Cys-108, and Cys-112 together coordinate [4Fe-4S] cluster.

Belongs to the complex I 23 kDa subunit family. NDH-1 is composed of 14 different subunits. Subunits NuoA, H, J, K, L, M, N constitute the membrane sector of the complex. It depends on [4Fe-4S] cluster as a cofactor.

Its subcellular location is the cell inner membrane. It carries out the reaction a quinone + NADH + 5 H(+)(in) = a quinol + NAD(+) + 4 H(+)(out). Its function is as follows. NDH-1 shuttles electrons from NADH, via FMN and iron-sulfur (Fe-S) centers, to quinones in the respiratory chain. The immediate electron acceptor for the enzyme in this species is believed to be ubiquinone. Couples the redox reaction to proton translocation (for every two electrons transferred, four hydrogen ions are translocated across the cytoplasmic membrane), and thus conserves the redox energy in a proton gradient. The protein is NADH-quinone oxidoreductase subunit I of Thiobacillus denitrificans (strain ATCC 25259 / T1).